A 223-amino-acid chain; its full sequence is ATP-dependent Clp protease proteolytic subunit 2 (223 aa).

Positions 1–40 (MHAGSGNDMDITRMTPTRLDDEPDAPEPETREDDNKTLNS) are disordered. The segment covering 21-32 (DEPDAPEPETRE) has biased composition (acidic residues). The active-site Nucleophile is Ser124. His149 is an active-site residue.

It belongs to the peptidase S14 family. In terms of assembly, fourteen ClpP subunits assemble into 2 heptameric rings which stack back to back to give a disk-like structure with a central cavity, resembling the structure of eukaryotic proteasomes.

It localises to the cytoplasm. It carries out the reaction Hydrolysis of proteins to small peptides in the presence of ATP and magnesium. alpha-casein is the usual test substrate. In the absence of ATP, only oligopeptides shorter than five residues are hydrolyzed (such as succinyl-Leu-Tyr-|-NHMec, and Leu-Tyr-Leu-|-Tyr-Trp, in which cleavage of the -Tyr-|-Leu- and -Tyr-|-Trp bonds also occurs).. Functionally, cleaves peptides in various proteins in a process that requires ATP hydrolysis. Has a chymotrypsin-like activity. Plays a major role in the degradation of misfolded proteins. This is ATP-dependent Clp protease proteolytic subunit 2 from Gluconobacter oxydans (strain 621H) (Gluconobacter suboxydans).